The following is a 529-amino-acid chain: E3 ubiquitin-protein ligase arih1 (529 aa).

Disordered stretches follow at residues 1–29 (MDSD…HEDE) and 46–69 (ERAG…EEDE). Residues 51–64 (CGEGGGSALGPGPG) show a composition bias toward gly residues. The UBA-like stretch occupies residues 77–125 (TAEQILQHMVECIREVNEVIQNPATITRILLSHFNWDKEKLMERYFDGN). Residues 154–365 (LDMPCQICYL…SAWYNCNRYN (212 aa)) form a TRIAD supradomain region. The Zn(2+) site is built by Cys-158, Cys-161, Cys-175, His-177, Cys-180, Cys-183, Cys-203, Cys-208, Cys-248, Cys-253, Cys-269, Cys-271, Cys-276, Cys-279, His-284, Cys-289, Cys-316, and Cys-319. An RING-type 1 zinc finger spans residues 158–208 (CQICYLNYPNSYFTGLECGHKFCMQCWGEYLTTKIIEEGMGQTISCPAHGC). The IBR-type zinc-finger motif lies at 228-289 (LKYQHLITNS…GENWHDPVKC (62 aa)). The RING-type 2; atypical zinc-finger motif lies at 316-347 (CPKCHVTIEKDGGCNHMVCRNQNCKAEFCWVC). The active site involves Cys-329. Residues Cys-334, Cys-339, Cys-344, Cys-347, His-354, and Cys-361 each coordinate Zn(2+). An ariadne domain region spans residues 380–529 (RAALQRYLFY…EKDLWEYIED (150 aa)).

Belongs to the RBR family. Ariadne subfamily. As to quaternary structure, interacts (via the first RING-type zinc finger) with ube2l3. Associates with cullin-RING ubiquitin ligase (CRL) complexes containing neddylated cullin.

The protein resides in the cytoplasm. It is found in the nucleus. It carries out the reaction [E2 ubiquitin-conjugating enzyme]-S-ubiquitinyl-L-cysteine + [acceptor protein]-L-lysine = [E2 ubiquitin-conjugating enzyme]-L-cysteine + [acceptor protein]-N(6)-ubiquitinyl-L-lysine.. It participates in protein modification; protein ubiquitination. With respect to regulation, autoinhibited by the ariadne domain, which masks the second RING-type zinc finger that contains the active site and inhibits the E3 activity. Inhibition is relieved upon binding to neddylated cullin-RING ubiquitin ligase complexes, which activate the E3 ligase activity of ARIH1. Its function is as follows. E3 ubiquitin-protein ligase, which catalyzes ubiquitination of target proteins together with ubiquitin-conjugating enzyme E2 ube2l3. Acts as an atypical E3 ubiquitin-protein ligase by working together with cullin-RING ubiquitin ligase (CRL) complexes and initiating ubiquitination of CRL substrates: associates with CRL complexes and specifically mediates addition of the first ubiquitin on CRLs targets. The initial ubiquitin is then elongated. E3 ubiquitin-protein ligase activity is activated upon binding to neddylated cullin-RING ubiquitin ligase complexes. In Xenopus laevis (African clawed frog), this protein is E3 ubiquitin-protein ligase arih1 (arih1).